The primary structure comprises 568 residues: Periplasmic trehalase (568 aa).

An N-terminal signal peptide occupies residues 1-38; that stretch reads MPHAPARSGDAMSAAAPPCCTSLLGLSLSMFVAPCALA. Residues R169, 176–177, N213, 222–224, 294–296, and G327 each bind substrate; these read WD, RSQ, and RPE. Active-site proton donor/acceptor residues include D329 and E511. Substrate is bound at residue E526.

Belongs to the glycosyl hydrolase 37 family.

The protein resides in the periplasm. It catalyses the reaction alpha,alpha-trehalose + H2O = alpha-D-glucose + beta-D-glucose. Its function is as follows. Provides the cells with the ability to utilize trehalose at high osmolarity by splitting it into glucose molecules that can subsequently be taken up by the phosphotransferase-mediated uptake system. The sequence is that of Periplasmic trehalase from Xanthomonas campestris pv. campestris (strain B100).